The sequence spans 304 residues: Undecaprenyl-diphosphatase (304 aa).

8 helical membrane-spanning segments follow: residues 5 to 25 (FLFILKALIIAIVEGLTEFVP), 47 to 67 (GFPEMYEVVIQLGAILAVVVL), 72 to 92 (ISSSVVEFLCYIFSFIGLKTS), 111 to 131 (FGINVIIGTIPAAILGLLFHD), 137 to 157 (LFSTKTVAIGFIVGGILLIVI), 209 to 231 (ISGLSTTVATEFTFFLAIPAMVG), 248 to 268 (TNWISLILGFIVAFIVSLVVI), and 283 to 303 (FAIYRVFAGIVLAILIFTKVI).

Belongs to the UppP family.

Its subcellular location is the cell membrane. It catalyses the reaction di-trans,octa-cis-undecaprenyl diphosphate + H2O = di-trans,octa-cis-undecaprenyl phosphate + phosphate + H(+). In terms of biological role, catalyzes the dephosphorylation of undecaprenyl diphosphate (UPP). Confers resistance to bacitracin. In Clostridium perfringens (strain ATCC 13124 / DSM 756 / JCM 1290 / NCIMB 6125 / NCTC 8237 / Type A), this protein is Undecaprenyl-diphosphatase.